A 595-amino-acid polypeptide reads, in one-letter code: Beta-(1--&gt;2)glucan export ATP-binding/permease protein NdvA (595 aa).

Residues 21–301 (SLLICAANVM…MSNFINLTVS (281 aa)) enclose the ABC transmembrane type-1 domain. 5 helical membrane passes run 22 to 42 (LLICAANVMLAIITIAEPILF), 55 to 75 (IILTLTIWVCFGISHIIAYVL), 128 to 148 (AIWLDFMRQHLSTLVALFILI), 152 to 172 (FNMNWRLSIVLVVLAIIYVLI), and 248 to 268 (TASTISIVCVLLLGAFFVAKG). The 235-residue stretch at 335-569 (VQFHHVTYKF…GGRFYKLLKA (235 aa)) folds into the ABC transporter domain. 368 to 375 (GPTGAGKT) contributes to the ATP binding site.

The protein belongs to the ABC transporter superfamily. Beta-(1--&gt;2)glucan exporter (TC 3.A.1.108.1) family. Homodimer.

Its subcellular location is the cell inner membrane. The catalysed reaction is [(1-&gt;2)-beta-D-glucosyl](n)(in) + ATP + H2O = [(1-&gt;2)-beta-D-glucosyl](n)(out) + ADP + phosphate + H(+). Its function is as follows. Involved in beta-(1--&gt;2)glucan export. Transmembrane domains (TMD) form a pore in the inner membrane and the ATP-binding domain (NBD) is responsible for energy generation. This Bartonella quintana (strain Toulouse) (Rochalimaea quintana) protein is Beta-(1--&gt;2)glucan export ATP-binding/permease protein NdvA.